A 426-amino-acid chain; its full sequence is D-tagatose-1,6-bisphosphate aldolase subunit KbaZ (426 aa).

It belongs to the GatZ/KbaZ family. KbaZ subfamily. Forms a complex with KbaY.

It participates in carbohydrate metabolism; D-tagatose 6-phosphate degradation; D-glyceraldehyde 3-phosphate and glycerone phosphate from D-tagatose 6-phosphate: step 2/2. Functionally, component of the tagatose-1,6-bisphosphate aldolase KbaYZ that is required for full activity and stability of the Y subunit. Could have a chaperone-like function for the proper and stable folding of KbaY. When expressed alone, KbaZ does not show any aldolase activity. The sequence is that of D-tagatose-1,6-bisphosphate aldolase subunit KbaZ from Escherichia coli (strain ATCC 8739 / DSM 1576 / NBRC 3972 / NCIMB 8545 / WDCM 00012 / Crooks).